The sequence spans 275 residues: 2,3,4,5-tetrahydropyridine-2,6-dicarboxylate N-succinyltransferase (275 aa).

Arginine 104 and aspartate 141 together coordinate substrate.

Belongs to the transferase hexapeptide repeat family. Homotrimer.

It is found in the cytoplasm. The catalysed reaction is (S)-2,3,4,5-tetrahydrodipicolinate + succinyl-CoA + H2O = (S)-2-succinylamino-6-oxoheptanedioate + CoA. It functions in the pathway amino-acid biosynthesis; L-lysine biosynthesis via DAP pathway; LL-2,6-diaminopimelate from (S)-tetrahydrodipicolinate (succinylase route): step 1/3. This is 2,3,4,5-tetrahydropyridine-2,6-dicarboxylate N-succinyltransferase from Aeromonas hydrophila subsp. hydrophila (strain ATCC 7966 / DSM 30187 / BCRC 13018 / CCUG 14551 / JCM 1027 / KCTC 2358 / NCIMB 9240 / NCTC 8049).